Reading from the N-terminus, the 370-residue chain is Tyrosine-protein kinase transforming protein SEA (370 aa).

The 264-residue stretch at T60–L323 folds into the Protein kinase domain. ATP contacts are provided by residues I66–V74 and K92. The Proton acceptor role is filled by D186. Y216 bears the Phosphotyrosine; by autocatalysis mark. The segment at P345–E370 is disordered. Over residues D357–E370 the composition is skewed to acidic residues.

The protein belongs to the protein kinase superfamily. Tyr protein kinase family.

The catalysed reaction is L-tyrosyl-[protein] + ATP = O-phospho-L-tyrosyl-[protein] + ADP + H(+). The chain is Tyrosine-protein kinase transforming protein SEA (V-SEA) from Galliformes.